Consider the following 348-residue polypeptide: Anthranilate phosphoribosyltransferase (348 aa).

5-phospho-alpha-D-ribose 1-diphosphate is bound by residues Gly91, Gly94–Asp95, Thr99, Asn101–Thr104, Lys119–Gly127, and Ser131. Gly91 is a binding site for anthranilate. Ser103 serves as a coordination point for Mg(2+). Asn122 provides a ligand contact to anthranilate. Arg177 contributes to the anthranilate binding site. The Mg(2+) site is built by Asp236 and Glu237.

This sequence belongs to the anthranilate phosphoribosyltransferase family. In terms of assembly, homodimer. Requires Mg(2+) as cofactor.

It catalyses the reaction N-(5-phospho-beta-D-ribosyl)anthranilate + diphosphate = 5-phospho-alpha-D-ribose 1-diphosphate + anthranilate. Its pathway is amino-acid biosynthesis; L-tryptophan biosynthesis; L-tryptophan from chorismate: step 2/5. Its function is as follows. Catalyzes the transfer of the phosphoribosyl group of 5-phosphorylribose-1-pyrophosphate (PRPP) to anthranilate to yield N-(5'-phosphoribosyl)-anthranilate (PRA). The protein is Anthranilate phosphoribosyltransferase of Synechococcus sp. (strain ATCC 27144 / PCC 6301 / SAUG 1402/1) (Anacystis nidulans).